Consider the following 254-residue polypeptide: MNRRHRIYEGKAKILYEGPEPGTYIQFFKDDATAFNAKKHEIIDGKGVLNNRISEHIFSHLGRLGIPTHFIKRINMREQLIKAVEIIPLEVVVRNVAAGSLSKRLGLEEGTPLSQSIIEFYYKNDSLDDPMVSEEHITAFGWAVPQEIEDIMQLSIRINDFLSGLFAGVNIQLIDFKMEFGRLWEDEAMRIVLADEISPDSARLWDIQTQEKMDKDRFRRDMGGLINAYQEVAKRLGIINENEPSRPNGPVLVK.

Belongs to the SAICAR synthetase family.

It catalyses the reaction 5-amino-1-(5-phospho-D-ribosyl)imidazole-4-carboxylate + L-aspartate + ATP = (2S)-2-[5-amino-1-(5-phospho-beta-D-ribosyl)imidazole-4-carboxamido]succinate + ADP + phosphate + 2 H(+). It participates in purine metabolism; IMP biosynthesis via de novo pathway; 5-amino-1-(5-phospho-D-ribosyl)imidazole-4-carboxamide from 5-amino-1-(5-phospho-D-ribosyl)imidazole-4-carboxylate: step 1/2. The polypeptide is Phosphoribosylaminoimidazole-succinocarboxamide synthase (Bartonella henselae (strain ATCC 49882 / DSM 28221 / CCUG 30454 / Houston 1) (Rochalimaea henselae)).